Reading from the N-terminus, the 274-residue chain is E3 ubiquitin-protein ligase complex SLX5-SLX8 subunit SLX8 (274 aa).

Disordered stretches follow at residues 1 to 117 (MARR…GNNI) and 136 to 159 (ANTPSASPMLDAAPPTTKPGTNSK). Residues 13–28 (ENLRIKRVRLESVRQN) show a composition bias toward basic and acidic residues. The residue at position 50 (Ser50) is a Phosphoserine. Thr66 carries the post-translational modification Phosphothreonine. A compositionally biased stretch (acidic residues) spans 66–75 (TSEEDGDDDL). Ser67 bears the Phosphoserine mark. The span at 97-108 (GNHDRETMHTEE) shows a compositional bias: basic and acidic residues. Residues 206-250 (CPICFEPPETALMTLCGHVFCCPCLFQMVNSSRTCRQFGHCALCR) form an RING-type zinc finger.

Component of the heterodimeric SUMO-targeted ubiquitin ligase (STUbL) complex composed of SLX5 and SLX8.

The protein localises to the nucleus. It is found in the chromosome. It localises to the centromere. The protein resides in the kinetochore. The enzyme catalyses S-ubiquitinyl-[E2 ubiquitin-conjugating enzyme]-L-cysteine + [acceptor protein]-L-lysine = [E2 ubiquitin-conjugating enzyme]-L-cysteine + N(6)-ubiquitinyl-[acceptor protein]-L-lysine.. The protein operates within protein modification; protein ubiquitination. In terms of biological role, component of the SUMO-targeted ubiquitin ligase (STUbL) complex SLX5/SLX8 that mediates ubiquitination and subsequent desumoylation of sumoylated proteins and proteins containing SUMO-like domains for their degradation. The STUbL complex SLX5/SLX8 stimulates ubiquitin conjugating enzymes, including UBC1, UBC4, UBC5 and UBC13-MMS2, and mediates the proteolytic down-regulation of sumoylated proteins. The STUbL complex SLX5/SLX8 is involved in ubiquitin-mediated degradation of histone variant CSE4, preventing mislocalization to euchromatin. The complex plays an essential role in maintenance of chromosome stability and links SUMO-dependent ubiquitination to a centromere-specific function during mitosis. The complex is involved in proteolysis of spindle positioning protein KAR9 and ensures correct spindle function by regulating levels of microtubule-associated proteins. During replication, the complex helps to prevent DNA lesions via recombination and has a role in localizing the DNA damage protein DCD2. The complex especially ubiquitinates the nuclease YEN1 and prevents persistent accumulation of a fraction of YEN1 associated with sites of activity in late G2/M and helps maintain the balance between pro- and anti-crossover pathways during homologous recombination. It is also involved in ubiquitin-mediated degradation of DNA repair proteins RAD52 and RAD57. Finally, the complex is recruited to distinct genomic hotspots of non-H2B protein ubiquitination (ub-hotspots) by the sumoylated transcription factor-like protein EUC1 where it ubiquitinates EUC1 and presumably other targets. The polypeptide is E3 ubiquitin-protein ligase complex SLX5-SLX8 subunit SLX8 (SLX8) (Saccharomyces cerevisiae (strain ATCC 204508 / S288c) (Baker's yeast)).